A 351-amino-acid chain; its full sequence is Anthranilate phosphoribosyltransferase (351 aa).

5-phospho-alpha-D-ribose 1-diphosphate contacts are provided by residues G89, 92 to 93 (GD), T97, 99 to 102 (NIST), 117 to 125 (KHGNRSASG), and S129. Residue G89 participates in anthranilate binding. S101 contacts Mg(2+). N120 serves as a coordination point for anthranilate. Position 175 (R175) interacts with anthranilate. D234 and E235 together coordinate Mg(2+).

This sequence belongs to the anthranilate phosphoribosyltransferase family. Homodimer. It depends on Mg(2+) as a cofactor.

The enzyme catalyses N-(5-phospho-beta-D-ribosyl)anthranilate + diphosphate = 5-phospho-alpha-D-ribose 1-diphosphate + anthranilate. It functions in the pathway amino-acid biosynthesis; L-tryptophan biosynthesis; L-tryptophan from chorismate: step 2/5. Its function is as follows. Catalyzes the transfer of the phosphoribosyl group of 5-phosphorylribose-1-pyrophosphate (PRPP) to anthranilate to yield N-(5'-phosphoribosyl)-anthranilate (PRA). In Synechococcus sp. (strain CC9902), this protein is Anthranilate phosphoribosyltransferase.